We begin with the raw amino-acid sequence, 313 residues long: DNA-directed RNA polymerase subunit alpha (313 aa).

The segment at Met1–Thr226 is alpha N-terminal domain (alpha-NTD). An alpha C-terminal domain (alpha-CTD) region spans residues Thr242–Glu313.

This sequence belongs to the RNA polymerase alpha chain family. Homodimer. The RNAP catalytic core consists of 2 alpha, 1 beta, 1 beta' and 1 omega subunit. When a sigma factor is associated with the core the holoenzyme is formed, which can initiate transcription.

It carries out the reaction RNA(n) + a ribonucleoside 5'-triphosphate = RNA(n+1) + diphosphate. In terms of biological role, DNA-dependent RNA polymerase catalyzes the transcription of DNA into RNA using the four ribonucleoside triphosphates as substrates. The sequence is that of DNA-directed RNA polymerase subunit alpha from Moorella thermoacetica (strain ATCC 39073 / JCM 9320).